We begin with the raw amino-acid sequence, 118 residues long: Cycloviolacin-O8 (118 aa).

The N-terminal stretch at 1-22 (MEMKNMVVGLFLIAAFALPALA) is a signal peptide. Positions 23–84 (TNFEKDFITH…THSNSINALG (62 aa)) are excised as a propeptide. Residues 85-115 (GTLPCGESCVWIPCISSVVGCSCKSKVCYKN) constitute a cross-link (cyclopeptide (Gly-Asn)). Intrachain disulfides connect Cys-89–Cys-105, Cys-93–Cys-107, and Cys-98–Cys-112. The propeptide occupies 116 to 118 (SLA).

Cycloviolacin-O8 is a cyclic peptide. As to expression, expressed in leaves, petals, petioles and roots but not in runners (at protein level).

Probably participates in a plant defense mechanism. The chain is Cycloviolacin-O8 (Voc1) from Viola odorata (Sweet violet).